Consider the following 313-residue polypeptide: Ornithine carbamoyltransferase (313 aa).

Carbamoyl phosphate-binding positions include 57-60 (STRT), R108, and 135-138 (HPTQ). L-ornithine-binding positions include N167, D231, and 235–236 (SM). Residues 272-273 (CL) and R300 each bind carbamoyl phosphate.

This sequence belongs to the aspartate/ornithine carbamoyltransferase superfamily. OTCase family.

The protein resides in the cytoplasm. The enzyme catalyses carbamoyl phosphate + L-ornithine = L-citrulline + phosphate + H(+). It functions in the pathway amino-acid biosynthesis; L-arginine biosynthesis; L-arginine from L-ornithine and carbamoyl phosphate: step 1/3. In terms of biological role, reversibly catalyzes the transfer of the carbamoyl group from carbamoyl phosphate (CP) to the N(epsilon) atom of ornithine (ORN) to produce L-citrulline. The chain is Ornithine carbamoyltransferase from Thermotoga petrophila (strain ATCC BAA-488 / DSM 13995 / JCM 10881 / RKU-1).